The chain runs to 438 residues: Glutaryl-CoA dehydrogenase, mitochondrial (438 aa).

Residues 1–44 (MALRGVYAQLLNRGPGLRVFRSWSSATAQTEKGEKTQSRSAKPS) constitute a mitochondrion transit peptide. Residues 138-139 (RS) and serine 186 contribute to the substrate site. FAD contacts are provided by residues 177-186 (FGLTEPNHGS), serine 186, and 212-214 (WIT). Lysine 240 carries the post-translational modification N6-acetyllysine. 287-294 (FGCLNNAR) serves as a coordination point for substrate. Residues arginine 319, glutamine 330, and 387–391 (DMLGG) each bind FAD. Glutamate 414 functions as the Proton acceptor in the catalytic mechanism. Residue glycine 415 coordinates substrate. Residues threonine 416, 416-418 (THD), and phenylalanine 434 each bind FAD.

It belongs to the acyl-CoA dehydrogenase family. In terms of assembly, homotetramer. It depends on FAD as a cofactor.

The protein localises to the mitochondrion matrix. It carries out the reaction glutaryl-CoA + oxidized [electron-transfer flavoprotein] + 2 H(+) = (2E)-butenoyl-CoA + reduced [electron-transfer flavoprotein] + CO2. It functions in the pathway amino-acid metabolism; lysine degradation. It participates in amino-acid metabolism; tryptophan metabolism. In terms of biological role, catalyzes the oxidative decarboxylation of glutaryl-CoA to crotonyl-CoA and CO(2) in the degradative pathway of L-lysine, L-hydroxylysine, and L-tryptophan metabolism. It uses electron transfer flavoprotein as its electron acceptor. This Bos taurus (Bovine) protein is Glutaryl-CoA dehydrogenase, mitochondrial (GCDH).